A 171-amino-acid polypeptide reads, in one-letter code: UPF0398 protein Sez_1569 (171 aa).

Belongs to the UPF0398 family.

This Streptococcus equi subsp. zooepidemicus (strain MGCS10565) protein is UPF0398 protein Sez_1569.